The primary structure comprises 226 residues: PKHD-type hydroxylase Abu_0724 (226 aa).

Residues 78 to 178 (HIISPFFNKY…RMVSFMWIQS (101 aa)) form the Fe2OG dioxygenase domain. Fe cation-binding residues include histidine 96, aspartate 98, and histidine 159. Position 169 (arginine 169) interacts with 2-oxoglutarate.

Fe(2+) serves as cofactor. L-ascorbate is required as a cofactor.

The chain is PKHD-type hydroxylase Abu_0724 from Aliarcobacter butzleri (strain RM4018) (Arcobacter butzleri).